Consider the following 122-residue polypeptide: Large ribosomal subunit protein uL14 (122 aa).

The protein belongs to the universal ribosomal protein uL14 family. As to quaternary structure, part of the 50S ribosomal subunit. Forms a cluster with proteins L3 and L19. In the 70S ribosome, L14 and L19 interact and together make contacts with the 16S rRNA in bridges B5 and B8.

Binds to 23S rRNA. Forms part of two intersubunit bridges in the 70S ribosome. The protein is Large ribosomal subunit protein uL14 of Gluconobacter oxydans (strain 621H) (Gluconobacter suboxydans).